A 463-amino-acid chain; its full sequence is Rop guanine nucleotide exchange factor 4 (463 aa).

Disordered regions lie at residues 1-25 and 55-87; these read MESS…YRRT and GHEE…SDID. The segment covering 59-68 has biased composition (acidic residues); the sequence is DVSEDAEEPK. Residues 69–78 show a composition bias toward basic and acidic residues; the sequence is DDVVNDVHGD. The 380-residue stretch at 84–463 folds into the PRONE domain; that stretch reads SDIDSAEDAE…VDRTVRNRDD (380 aa).

Interacts with ARAC10/ROP11. In terms of tissue distribution, expressed in root vascular tissue and trichoblast cell files. Expressed in root metaxylem cell files. Expressed in guard cells of cotyledons, rosette leaves, sepals, petal, stigmas and siliques. Expressed in root metaxylem cell files.

It localises to the cytoplasm. It is found in the cell membrane. Guanine-nucleotide exchange factor (GEF) that acts as an activator of Rop (Rho of plants) GTPases by promoting the exchange of GDP for GTP. In association with ROPGEF1, acts as a specific regulator of ARAC10/ROP11 function in ABA-mediated stomatal closure. This Arabidopsis thaliana (Mouse-ear cress) protein is Rop guanine nucleotide exchange factor 4 (ROPGEF4).